The chain runs to 61 residues: Small ribosomal subunit protein uS14 (61 aa).

Positions 24, 27, 40, and 43 each coordinate Zn(2+).

Belongs to the universal ribosomal protein uS14 family. Zinc-binding uS14 subfamily. As to quaternary structure, part of the 30S ribosomal subunit. Contacts proteins S3 and S10. Zn(2+) is required as a cofactor.

Binds 16S rRNA, required for the assembly of 30S particles and may also be responsible for determining the conformation of the 16S rRNA at the A site. The polypeptide is Small ribosomal subunit protein uS14 (Petrotoga mobilis (strain DSM 10674 / SJ95)).